The following is a 247-amino-acid chain: CDP-diacylglycerol pyrophosphatase (247 aa).

The chain crosses the membrane as a helical span at residues 5–22; the sequence is IVLALVVSVAVAGGWLWM.

It belongs to the Cdh family.

It is found in the cell inner membrane. It catalyses the reaction a CDP-1,2-diacyl-sn-glycerol + H2O = a 1,2-diacyl-sn-glycero-3-phosphate + CMP + 2 H(+). Its pathway is phospholipid metabolism; CDP-diacylglycerol degradation; phosphatidate from CDP-diacylglycerol: step 1/1. The chain is CDP-diacylglycerol pyrophosphatase from Enterobacter sp. (strain 638).